The following is a 499-amino-acid chain: Probable cytosol aminopeptidase (499 aa).

2 residues coordinate Mn(2+): Lys-267 and Asp-272. Lys-279 is a catalytic residue. Residues Asp-290, Asp-349, and Glu-351 each contribute to the Mn(2+) site. Arg-353 is a catalytic residue.

It belongs to the peptidase M17 family. Requires Mn(2+) as cofactor.

It localises to the cytoplasm. The enzyme catalyses Release of an N-terminal amino acid, Xaa-|-Yaa-, in which Xaa is preferably Leu, but may be other amino acids including Pro although not Arg or Lys, and Yaa may be Pro. Amino acid amides and methyl esters are also readily hydrolyzed, but rates on arylamides are exceedingly low.. The catalysed reaction is Release of an N-terminal amino acid, preferentially leucine, but not glutamic or aspartic acids.. Its function is as follows. Presumably involved in the processing and regular turnover of intracellular proteins. Catalyzes the removal of unsubstituted N-terminal amino acids from various peptides. The protein is Probable cytosol aminopeptidase of Buchnera aphidicola subsp. Acyrthosiphon pisum (strain 5A).